Consider the following 729-residue polypeptide: Denticleless protein homolog (729 aa).

M1 is modified (N-acetylmethionine). 3 WD repeats span residues 47–89 (GVPV…SKKT), 96–135 (AHWNAVFDLAWVPGELKLVTAAGDQTAKFWDVRAGELMGT), and 138–178 (GHQC…KDGF). The short motif at 168–171 (WDTR) is the DDB1-binding motif element. Residues 189–198 (HNTADKQTPS) are compositionally biased toward polar residues. The interval 189-212 (HNTADKQTPSKPKKKQNSKGLAPA) is disordered. T196 is subject to Phosphothreonine. Residues 197-203 (PSKPKKK) carry the Nuclear localization signal motif. WD repeat units lie at residues 214 to 253 (DSQQSVTVVLFQDENTLVSAGAVDGIIKVWDLRKNYTAYR), 269 to 308 (TRKLGYSSLVLDSTGSTLFANCTDDNIYMFNMTGLKTSPV), 313 to 354 (GHQN…HPPT), and 358 to 398 (GHSQ…EEKP). Residues 243–246 (WDLR) carry the DDB1-binding motif motif. S409 and S425 each carry phosphoserine. 2 disordered regions span residues 416–445 (KACPVTVPSSQSTPAKAPRAKSSPSISSPS) and 460–491 (PSSTPTFSVKTTPATTRSSVSRRGSISSVSPK). The span at 427-445 (STPAKAPRAKSSPSISSPS) shows a compositional bias: low complexity. Residues 460–475 (PSSTPTFSVKTTPATT) show a composition bias toward polar residues. A Phosphothreonine; by CDK1 and CDK2 modification is found at T463. The segment covering 476–491 (RSSVSRRGSISSVSPK) has biased composition (low complexity). Phosphoserine is present on residues S484, S489, S494, and S511. The disordered stretch occupies residues 504–546 (VTRTPSSSPPVTPPASETKISSPRKALIPVSQKSSQADACSES). The residue at position 515 (T515) is a Phosphothreonine. S556 is subject to Phosphoserine. The span at 596-607 (VLSQDSEGPTKS) shows a compositional bias: polar residues. Positions 596 to 705 (VLSQDSEGPT…GPVTITPSSM (110 aa)) are disordered. Composition is skewed to low complexity over residues 630-645 (EGCGPLPLPLRPCGEG) and 674-688 (SSPRSPSSQTPSSRR). Phosphoserine is present on residues S675 and S678. Residues T683 and T701 each carry the phosphothreonine modification.

The protein belongs to the WD repeat cdt2 family. As to quaternary structure, component of the DCX(DTL) E3 ubiquitin ligase complex (also called CRL4(CDT2)), at least composed of CUL4 (CUL4A or CUL4B), DDB1, DTL/CDT2 and RBX1. Interacts with CDKN1A and DDB1. Interacts with FBXO11; SCF(FBXWO11) controls DTL stability but DCX(DTL) does not control FBXO11 stability. Interacts with CRY1. Post-translationally, ubiquitinated by the anaphase promoting complex/cyclosome (APC/C). Autoubiquitinated through 'Lys-48'-polyubiquitin chains in a PCNA-independent reaction, allowing proteasomal turnover. Polyubiquitinated by SCF(FBXO11) when not phosphorylated, leading to its degradation. A tight regulation of the polyubiquitination by SCF(FBXO11) is involved in the control of different processes such as TGF-beta signaling, cell cycle progression and exit. Phosphorylated at Thr-463 by CDK1/Cyclin B and CDK2/Cycnlin A but not by CDK2/Cyclin E, MAPK1 or PLK1. Phosphorylation at Thr-463 inhibits the interaction with FBXO11 and decreases upon cell cycle exit induced by TGF-beta or serum starvation.

It localises to the nucleus. Its subcellular location is the nucleus membrane. It is found in the cytoplasm. The protein localises to the cytoskeleton. The protein resides in the microtubule organizing center. It localises to the centrosome. Its subcellular location is the chromosome. The protein operates within protein modification; protein ubiquitination. In terms of biological role, substrate-specific adapter of a DCX (DDB1-CUL4-X-box) E3 ubiquitin-protein ligase complex required for cell cycle control, DNA damage response and translesion DNA synthesis. The DCX(DTL) complex, also named CRL4(CDT2) complex, mediates the polyubiquitination and subsequent degradation of CDT1, CDKN1A/p21(CIP1), FBH1, KMT5A and SDE2. CDT1 degradation in response to DNA damage is necessary to ensure proper cell cycle regulation of DNA replication. CDKN1A/p21(CIP1) degradation during S phase or following UV irradiation is essential to control replication licensing. KMT5A degradation is also important for a proper regulation of mechanisms such as TGF-beta signaling, cell cycle progression, DNA repair and cell migration. Most substrates require their interaction with PCNA for their polyubiquitination: substrates interact with PCNA via their PIP-box, and those containing the 'K+4' motif in the PIP box, recruit the DCX(DTL) complex, leading to their degradation. In undamaged proliferating cells, the DCX(DTL) complex also promotes the 'Lys-164' monoubiquitination of PCNA, thereby being involved in PCNA-dependent translesion DNA synthesis. The DDB1-CUL4A-DTL E3 ligase complex regulates the circadian clock function by mediating the ubiquitination and degradation of CRY1. This Mus musculus (Mouse) protein is Denticleless protein homolog (Dtl).